A 271-amino-acid chain; its full sequence is Type III pantothenate kinase (271 aa).

6-13 (DVRNTHTV) is an ATP binding site. Substrate is bound at residue 109–112 (GADR). Asp-111 serves as the catalytic Proton acceptor. K(+) is bound at residue Asp-131. Ser-134 contributes to the ATP binding site. Thr-186 contacts substrate.

The protein belongs to the type III pantothenate kinase family. In terms of assembly, homodimer. NH4(+) is required as a cofactor. Requires K(+) as cofactor.

It localises to the cytoplasm. The enzyme catalyses (R)-pantothenate + ATP = (R)-4'-phosphopantothenate + ADP + H(+). It functions in the pathway cofactor biosynthesis; coenzyme A biosynthesis; CoA from (R)-pantothenate: step 1/5. Functionally, catalyzes the phosphorylation of pantothenate (Pan), the first step in CoA biosynthesis. This is Type III pantothenate kinase from Mycobacteroides abscessus (strain ATCC 19977 / DSM 44196 / CCUG 20993 / CIP 104536 / JCM 13569 / NCTC 13031 / TMC 1543 / L948) (Mycobacterium abscessus).